The following is a 275-amino-acid chain: Reticulon-like protein B1 (275 aa).

Composition is skewed to basic and acidic residues over residues Met1–Ser10 and Val20–Gly38. A disordered region spans residues Met1–Ser68. Ala2 carries the post-translational modification N-acetylalanine. Residues Pro59–Ser68 show a composition bias toward low complexity. The 186-residue stretch at Pro89–Lys274 folds into the Reticulon domain. 3 helical membrane passes run Lys99–Glu119, Tyr120–Trp140, and Phe194–Leu214.

As to quaternary structure, interacts with VirB2. In terms of tissue distribution, predominantly expressed in root tissues.

It is found in the endoplasmic reticulum membrane. It localises to the cell membrane. In terms of biological role, plays a role in the Agrobacterium-mediated plant transformation via its interaction with VirB2, the major component of the T-pilus. This Arabidopsis thaliana (Mouse-ear cress) protein is Reticulon-like protein B1 (RTNLB1).